A 142-amino-acid chain; its full sequence is MRNFDLSPLMRQWIGFDKLANALQNAGEGQSFPPYNIEKSDDNHYRITLALAGFRQEDLEIQLEGTRLSVKGTPEQPKEEKKWLHQGLMNQPFSLSFTLAENMEVSGATFVNGLLHIDLIRNEPEPIAAQRIAISERPALNS.

Positions 26 to 137 constitute a sHSP domain; it reads AGEGQSFPPY…AAQRIAISER (112 aa).

This sequence belongs to the small heat shock protein (HSP20) family. In terms of assembly, homodimer. Forms homomultimers of about 100-150 subunits at optimal growth temperatures. Conformation changes to oligomers at high temperatures or high ionic concentrations. The decrease in size of the multimers is accompanied by an increase in chaperone activity.

The protein resides in the cytoplasm. In terms of biological role, associates with aggregated proteins, together with IbpA, to stabilize and protect them from irreversible denaturation and extensive proteolysis during heat shock and oxidative stress. Aggregated proteins bound to the IbpAB complex are more efficiently refolded and reactivated by the ATP-dependent chaperone systems ClpB and DnaK/DnaJ/GrpE. Its activity is ATP-independent. The polypeptide is Small heat shock protein IbpB (Shigella boydii serotype 18 (strain CDC 3083-94 / BS512)).